A 613-amino-acid polypeptide reads, in one-letter code: Ribosome-associated molecular chaperone SSB (613 aa).

Positions 1-391 (MADGVFQGAI…ILTGQSTSDE (391 aa)) are nucleotide binding domain (NBD). Residues 16-18 (TTY), Lys73, 205-207 (GGT), 271-278 (ERAKRTLS), and Gly342 contribute to the ATP site. The segment at 392–402 (TKDLLLLDVAP) is inter-domain linker. Residues 403 to 613 (LSLGVGMQGD…RVVTKAMSSR (211 aa)) form a substrate binding domain (SBD) region. The lid domain (SBDalpha) stretch occupies residues 516-612 (SEDIEKMVNQ…KRVVTKAMSS (97 aa)). The Nuclear export signal motif lies at 574-582 (IEAALADAL).

The protein belongs to the heat shock protein 70 family. Ssb-type Hsp70 subfamily. Binds to ribosomes. Binds close to the ribosomal tunnel exit via contacts with both ribosomal proteins and rRNA. Directly interacts with nascent polypeptides. This interaction is dependent on the ribosome-associated complex (RAC). Interacts with SSE1. Interacts with FES1.

It is found in the cytoplasm. The enzyme catalyses ATP + H2O = ADP + phosphate + H(+). Functionally, ribosome-bound, Hsp70-type chaperone that assists in the cotranslational folding of newly synthesized proteins in the cytosol. Stimulates folding by interacting with nascent chains, binding to short, largely hydrophobic sequences exposed by unfolded proteins, thereby stabilizing longer, more slowly translated, and aggregation-prone nascent polypeptides and domains that cannot fold stably until fully synthesized. The Hsp70-protein substrate interaction depends on ATP-binding and on allosteric regulation between the NBD and the SBD. The ATP-bound state is characterized by a fast exchange rate of substrate (low affinity state), while in the ADP-bound state exchange is much slower (high affinity state). During the Hsp70 cycle, the chaperone switches between the ATP-bound state (open conformation) and the ADP-bound state (closed conformation) by major conformational rearrangements involving mainly the lid domain. Ssb cooperates with a specific Hsp40/Hsp70 co-chaperone termed the ribosome-associated complex (RAC), which stimulates the ATPase activity of the ribosome-associated pool of Ssbs and switches it to the high affinity substrate binding state. Hsp110 chaperone SSE1 and FES1 act as nucleotide exchange factors that cause substrate release. The protein is Ribosome-associated molecular chaperone SSB (SSB1) of Candida glabrata (strain ATCC 2001 / BCRC 20586 / JCM 3761 / NBRC 0622 / NRRL Y-65 / CBS 138) (Yeast).